The sequence spans 758 residues: 5-methyltetrahydropteroyltriglutamate--homocysteine methyltransferase (758 aa).

5-methyltetrahydropteroyltri-L-glutamate contacts are provided by residues 16 to 19 (RELK) and Lys117. Residues 436-438 (IGS) and Glu489 each bind L-homocysteine. Residues 436–438 (IGS) and Glu489 contribute to the L-methionine site. 5-methyltetrahydropteroyltri-L-glutamate contacts are provided by residues 520 to 521 (RC) and Trp566. Asp604 serves as a coordination point for L-homocysteine. Asp604 is a binding site for L-methionine. Glu610 serves as a coordination point for 5-methyltetrahydropteroyltri-L-glutamate. His646, Cys648, and Glu670 together coordinate Zn(2+). His699 functions as the Proton donor in the catalytic mechanism. Cys731 is a Zn(2+) binding site.

This sequence belongs to the vitamin-B12 independent methionine synthase family. Zn(2+) serves as cofactor.

It catalyses the reaction 5-methyltetrahydropteroyltri-L-glutamate + L-homocysteine = tetrahydropteroyltri-L-glutamate + L-methionine. It participates in amino-acid biosynthesis; L-methionine biosynthesis via de novo pathway; L-methionine from L-homocysteine (MetE route): step 1/1. Catalyzes the transfer of a methyl group from 5-methyltetrahydrofolate to homocysteine resulting in methionine formation. This is 5-methyltetrahydropteroyltriglutamate--homocysteine methyltransferase from Ruthia magnifica subsp. Calyptogena magnifica.